We begin with the raw amino-acid sequence, 382 residues long: Galactokinase (382 aa).

34-37 (EHTD) contributes to the substrate binding site. 124 to 130 (GAGLSSS) lines the ATP pocket. Ser130 and Glu162 together coordinate Mg(2+). The active-site Proton acceptor is the Asp174. A substrate-binding site is contributed by Tyr223.

This sequence belongs to the GHMP kinase family. GalK subfamily.

The protein localises to the cytoplasm. The catalysed reaction is alpha-D-galactose + ATP = alpha-D-galactose 1-phosphate + ADP + H(+). It participates in carbohydrate metabolism; galactose metabolism. Catalyzes the transfer of the gamma-phosphate of ATP to D-galactose to form alpha-D-galactose-1-phosphate (Gal-1-P). In Salmonella newport (strain SL254), this protein is Galactokinase.